We begin with the raw amino-acid sequence, 243 residues long: Uridine-cytidine kinase B (243 aa).

Residue 22-29 (GGTASGKT) coordinates ATP.

It belongs to the uridine kinase family.

The enzyme catalyses uridine + ATP = UMP + ADP + H(+). The catalysed reaction is cytidine + ATP = CMP + ADP + H(+). It functions in the pathway pyrimidine metabolism; CTP biosynthesis via salvage pathway; CTP from cytidine: step 1/3. It participates in pyrimidine metabolism; UMP biosynthesis via salvage pathway; UMP from uridine: step 1/1. Functionally, catalyzes the conversion of uridine into uridine monophosphate and cytidine into cytidine monophosphate in the pyrimidine salvage pathway. This Dictyostelium discoideum (Social amoeba) protein is Uridine-cytidine kinase B (udkB).